The primary structure comprises 192 residues: Signal peptidase complex subunit 2 (192 aa).

Residues 1–46 (MEEKKTESTNKNVKKANLLDHHSIKHILDESVSDIVTSRGYKEDVR) are Cytoplasmic-facing. Residues 47–69 (LSNLKLILGTIIIVVALVAQFYN) traverse the membrane as a helical segment. Residues 70-78 (KKFPENRDF) are Lumenal-facing. A helical membrane pass occupies residues 79 to 98 (LIGCIALYVVLNAVLQLILY). Topologically, residues 99-192 (TKEKNAILFT…YAEEEPKKKK (94 aa)) are cytoplasmic.

It belongs to the SPCS2 family. In terms of assembly, component of the signal peptidase complex (SPC) composed of a catalytic subunit SEC11 and three accessory subunits SPCS1, SPCS2 and SPCS3. The complex induces a local thinning of the ER membrane which is used to measure the length of the signal peptide (SP) h-region of protein substrates. This ensures the selectivity of the complex towards h-regions shorter than 18-20 amino acids.

It localises to the endoplasmic reticulum membrane. In terms of biological role, component of the signal peptidase complex (SPC) which catalyzes the cleavage of N-terminal signal sequences from nascent proteins as they are translocated into the lumen of the endoplasmic reticulum. Enhances the enzymatic activity of SPC and facilitates the interactions between different components of the translocation site. The sequence is that of Signal peptidase complex subunit 2 from Arabidopsis thaliana (Mouse-ear cress).